The primary structure comprises 470 residues: tRNA-2-methylthio-N(6)-dimethylallyladenosine synthase (470 aa).

The MTTase N-terminal domain maps to 5–122; that stretch reads RKLYVKSFGC…LPELLAEAKA (118 aa). Positions 14, 50, 85, 163, 167, and 170 each coordinate [4Fe-4S] cluster. One can recognise a Radical SAM core domain in the interval 149–383; it reads RSRGPAAFVT…LLEASKAAFD (235 aa). One can recognise a TRAM domain in the interval 384–446; that stretch reads ESCRGRTFDI…PNSLAGVPAE (63 aa). The tract at residues 439 to 470 is disordered; that stretch reads SLAGVPAEASEPSVSQSPVSSARSRPLAAMEA. Over residues 444 to 464 the composition is skewed to low complexity; sequence PAEASEPSVSQSPVSSARSRP.

Belongs to the methylthiotransferase family. MiaB subfamily. Monomer. It depends on [4Fe-4S] cluster as a cofactor.

It localises to the cytoplasm. It catalyses the reaction N(6)-dimethylallyladenosine(37) in tRNA + (sulfur carrier)-SH + AH2 + 2 S-adenosyl-L-methionine = 2-methylsulfanyl-N(6)-dimethylallyladenosine(37) in tRNA + (sulfur carrier)-H + 5'-deoxyadenosine + L-methionine + A + S-adenosyl-L-homocysteine + 2 H(+). Catalyzes the methylthiolation of N6-(dimethylallyl)adenosine (i(6)A), leading to the formation of 2-methylthio-N6-(dimethylallyl)adenosine (ms(2)i(6)A) at position 37 in tRNAs that read codons beginning with uridine. The chain is tRNA-2-methylthio-N(6)-dimethylallyladenosine synthase from Xanthobacter autotrophicus (strain ATCC BAA-1158 / Py2).